Here is a 339-residue protein sequence, read N- to C-terminus: DNA-directed RNA polymerase subunit alpha (339 aa).

The interval 1–234 (MIEKNWQELI…DQFQIFINFE (234 aa)) is alpha N-terminal domain (alpha-NTD). The segment at 251–339 (FNPALLRKVD…DLAKRFEDHV (89 aa)) is alpha C-terminal domain (alpha-CTD).

The protein belongs to the RNA polymerase alpha chain family. Homodimer. The RNAP catalytic core consists of 2 alpha, 1 beta, 1 beta' and 1 omega subunit. When a sigma factor is associated with the core the holoenzyme is formed, which can initiate transcription.

The enzyme catalyses RNA(n) + a ribonucleoside 5'-triphosphate = RNA(n+1) + diphosphate. Its function is as follows. DNA-dependent RNA polymerase catalyzes the transcription of DNA into RNA using the four ribonucleoside triphosphates as substrates. This Maricaulis maris (strain MCS10) (Caulobacter maris) protein is DNA-directed RNA polymerase subunit alpha.